Reading from the N-terminus, the 350-residue chain is MTGGGVLATMDPVRKLVRSQPKIGRHPVAAGQDGRDRHPIRSWECGERARTARTGRTVGRAADPSDHGPSLYNFGGCVEINILGPVSIDTSHSGGGIRAGKVRTLVATLAIDAGRAVSLADLVDELWGATPPDNVLNALQAHAARARKVLNERACPERAGGILRSVLGGYLLEIDPQCVDGNRFLRLVSQGAALLPADPTRAVELLETGLRLWRGPALIDAGEGRRCRGAAALFEERRLTALEDLISAMFLRGGEAQAIAMLQQLVAQYPLRERFCELLMVGLYRVGRQGDALESYRLARKRLDDELGVQPGALLRRRHAEILAQDPVLKVPSALWREPYAPADTSLLSA.

A DNA-binding region (ompR/PhoB-type) is located at residues 69–174; it reads PSLYNFGGCV…SVLGGYLLEI (106 aa).

This sequence belongs to the AfsR/DnrI/RedD regulatory family.

Functionally, the RedD protein is probably one of several delicately balanced regulatory factors that contribute to the control of the biosynthesis of the antibiotic undecylprodigiosin (Red) in S.coelicolor. The protein is Transcriptional regulator RedD (redD) of Streptomyces coelicolor (strain ATCC BAA-471 / A3(2) / M145).